Here is a 220-residue protein sequence, read N- to C-terminus: N-(5'-phosphoribosyl)anthranilate isomerase (220 aa).

It belongs to the TrpF family.

The enzyme catalyses N-(5-phospho-beta-D-ribosyl)anthranilate = 1-(2-carboxyphenylamino)-1-deoxy-D-ribulose 5-phosphate. It functions in the pathway amino-acid biosynthesis; L-tryptophan biosynthesis; L-tryptophan from chorismate: step 3/5. In Bordetella petrii (strain ATCC BAA-461 / DSM 12804 / CCUG 43448), this protein is N-(5'-phosphoribosyl)anthranilate isomerase.